We begin with the raw amino-acid sequence, 586 residues long: Monoterpene synthase TPS4, chloroplastic (586 aa).

The transit peptide at 1–47 (MAATRNLSLLAQSSQPWAGIYGSHGSPRPISSWLRRQSIAKTSYICM) directs the protein to the chloroplast. Residues aspartate 340, aspartate 344, aspartate 485, threonine 489, and glutamate 493 each contribute to the Mg(2+) site. A DDXXD motif motif is present at residues 340–344 (DDIFD).

Belongs to the terpene synthase family. Tpsg subfamily. In terms of assembly, monomer. It depends on Mg(2+) as a cofactor.

It localises to the plastid. The protein resides in the chloroplast. It carries out the reaction (2E)-geranyl diphosphate + H2O = (2E)-geraniol + diphosphate. The protein operates within secondary metabolite biosynthesis; terpenoid biosynthesis. In terms of biological role, monoterpene synthase involved in the biosynthesis of volatile organic compounds. Mediates the conversion of (2E)-geranyl diphosphate (GPP) into the acyclic monoterpene, geraniol. Does not use (2E,6E)-farnesyl diphosphate (FPP) as substrate. The polypeptide is Monoterpene synthase TPS4, chloroplastic (Cananga odorata (Ylang-ylang tree)).